Consider the following 430-residue polypeptide: Bifunctional protein GlmU (430 aa).

The segment at 1-227 (MISKTHTFVI…GEEATGINNR (227 aa)) is pyrophosphorylase. UDP-N-acetyl-alpha-D-glucosamine contacts are provided by residues lysine 25, glutamine 74, 79-80 (GT), 104-106 (YGD), glycine 140, glutamate 154, asparagine 168, and asparagine 225. Aspartate 106 provides a ligand contact to Mg(2+). Asparagine 225 is a binding site for Mg(2+). The segment at 228-248 (NDLIKAEFYFQENKRKIFTDS) is linker. Positions 249 to 430 (GVTLVAPETV…REKQVTKRIK (182 aa)) are N-acetyltransferase. Positions 314 and 332 each coordinate UDP-N-acetyl-alpha-D-glucosamine. The active-site Proton acceptor is histidine 344. The UDP-N-acetyl-alpha-D-glucosamine site is built by tyrosine 347 and asparagine 358. Residues alanine 361, 367 to 368 (NY), alanine 404, and arginine 421 contribute to the acetyl-CoA site.

This sequence in the N-terminal section; belongs to the N-acetylglucosamine-1-phosphate uridyltransferase family. The protein in the C-terminal section; belongs to the transferase hexapeptide repeat family. In terms of assembly, homotrimer. Requires Mg(2+) as cofactor.

The protein resides in the cytoplasm. The enzyme catalyses alpha-D-glucosamine 1-phosphate + acetyl-CoA = N-acetyl-alpha-D-glucosamine 1-phosphate + CoA + H(+). It catalyses the reaction N-acetyl-alpha-D-glucosamine 1-phosphate + UTP + H(+) = UDP-N-acetyl-alpha-D-glucosamine + diphosphate. It functions in the pathway nucleotide-sugar biosynthesis; UDP-N-acetyl-alpha-D-glucosamine biosynthesis; N-acetyl-alpha-D-glucosamine 1-phosphate from alpha-D-glucosamine 6-phosphate (route II): step 2/2. Its pathway is nucleotide-sugar biosynthesis; UDP-N-acetyl-alpha-D-glucosamine biosynthesis; UDP-N-acetyl-alpha-D-glucosamine from N-acetyl-alpha-D-glucosamine 1-phosphate: step 1/1. The protein operates within bacterial outer membrane biogenesis; LPS lipid A biosynthesis. Its function is as follows. Catalyzes the last two sequential reactions in the de novo biosynthetic pathway for UDP-N-acetylglucosamine (UDP-GlcNAc). The C-terminal domain catalyzes the transfer of acetyl group from acetyl coenzyme A to glucosamine-1-phosphate (GlcN-1-P) to produce N-acetylglucosamine-1-phosphate (GlcNAc-1-P), which is converted into UDP-GlcNAc by the transfer of uridine 5-monophosphate (from uridine 5-triphosphate), a reaction catalyzed by the N-terminal domain. The polypeptide is Bifunctional protein GlmU (Wolbachia pipientis wMel).